The following is a 907-amino-acid chain: Gamma-tubulin complex component 3 (907 aa).

At alanine 2 the chain carries N-acetylalanine. Phosphoserine is present on serine 113. Polar residues predominate over residues 210–230 (NQPSSQATTSKGVPSAVSRNM). The interval 210–241 (NQPSSQATTSKGVPSAVSRNMTRSRREGDTGG) is disordered.

It belongs to the TUBGCP family. Component of the gamma-tubulin ring complex (gTuRC) consisting of TUBGCP2, TUBGCP3, TUBGCP4, TUBGCP5 and TUBGCP6 and gamma-tubulin TUBG1 or TUBG2. TUBGCP2, TUBGCP3, TUBGCP4, TUBGCP5 and TUBGCP6 assemble in a 5:5:2:1:1 stoichiometry; each is associated with a gamma-tubulin, thereby arranging 14 gamma-tubulins in a helical manner. Gamma-tubulin at the first position is blocked by TUBGCP3 at the last position, allowing 13 protafilaments to grow into a microtubule. The gTuRC (via TUBGCP3 and TUBGCP6) interacts with ACTB and MZT1; the interactions form a luminal bridge that stabilizes the initial structure during complex assembly. The gTuRC (via TUBGCP2) interacts with MZT2A/MZT2B and CDK5RAP2 (via CM1 motif); the interactions play a role in gTuRC activation. Interacts with NIN (via N-terminus); the interaction may promote recruitment of the gamma-tubulin ring complex to the centrosome. In terms of tissue distribution, ubiquitously expressed.

It localises to the cytoplasm. The protein resides in the cytoskeleton. Its subcellular location is the microtubule organizing center. The protein localises to the centrosome. Component of the gamma-tubulin ring complex (gTuRC) which mediates microtubule nucleation. The gTuRC regulates the minus-end nucleation of alpha-beta tubulin heterodimers that grow into microtubule protafilaments, a critical step in centrosome duplication and spindle formation. In Homo sapiens (Human), this protein is Gamma-tubulin complex component 3 (TUBGCP3).